A 139-amino-acid polypeptide reads, in one-letter code: MRTLWIVAVWLVGVEGNLYQFGKMIKNKTGKPAMFSYSAYGCYCGWGGQGKPQDPSDRCCFLHDCCYTRVNNCSPKMTLYSYRFENGDIICGDNDPCRKAVCECDREAAICLGENVNTYDEKYRFYSSSYCTEEESEKC.

An N-terminal signal peptide occupies residues M1–G16. Disulfide bonds link C42–C131, C44–C60, C59–C111, C65–C139, C66–C104, C73–C97, and C91–C102. Residues Y43, G45, and G47 each coordinate Ca(2+). H63 is an active-site residue. D64 contributes to the Ca(2+) binding site. The active site involves D105.

It belongs to the phospholipase A2 family. Group II subfamily. D49 sub-subfamily. Requires Ca(2+) as cofactor. As to expression, expressed by the venom gland.

Its subcellular location is the secreted. The enzyme catalyses a 1,2-diacyl-sn-glycero-3-phosphocholine + H2O = a 1-acyl-sn-glycero-3-phosphocholine + a fatty acid + H(+). Its function is as follows. PLA2 catalyzes the calcium-dependent hydrolysis of the 2-acyl groups in 3-sn-phosphoglycerides. This is Acidic phospholipase A2 4 from Echis carinatus sochureki (Saw-scaled viper).